A 1175-amino-acid chain; its full sequence is Major DNA-binding protein (1175 aa).

A zinc finger lies at 496–509 (CSLCDRASRPACAH). The Required for filament formation signature appears at 825 to 826 (FW). Residues 1151–1175 (KRPPPEDDLFDMGAPPEKRLTFDML) form a required for nuclear localization region.

This sequence belongs to the herpesviridae major DNA-binding protein family. As to quaternary structure, homooligomers. Forms double-helical filaments necessary for the formation of replication compartments within the host nucleus. Interacts with the origin-binding protein. Interacts with the helicase primase complex; this interaction stimulates primer synthesis activity of the helicase-primase complex. Interacts with the DNA polymerase. Interacts with the alkaline exonuclease; this interaction increases its nuclease processivity.

It is found in the host nucleus. Plays several crucial roles in viral infection. Participates in the opening of the viral DNA origin to initiate replication by interacting with the origin-binding protein. May disrupt loops, hairpins and other secondary structures present on ssDNA to reduce and eliminate pausing of viral DNA polymerase at specific sites during elongation. Promotes viral DNA recombination by performing strand-transfer, characterized by the ability to transfer a DNA strand from a linear duplex to a complementary single-stranded DNA circle. Can also catalyze the renaturation of complementary single strands. Additionally, reorganizes the host cell nucleus, leading to the formation of prereplicative sites and replication compartments. This process is driven by the protein which can form double-helical filaments in the absence of DNA. This Suid herpesvirus 1 (SuHV-1) protein is Major DNA-binding protein.